The following is a 356-amino-acid chain: Pavine N-methyltransferase (356 aa).

Residues F96, S97, G135, N159, Q163, D185, V186, and V201 each contribute to the S-adenosyl-L-homocysteine site. 8 residues coordinate S-adenosyl-L-methionine: F96, S97, G135, N159, Q163, D185, V186, and V201. E205 is a (S)-tetrahydropapaverine binding site. C331 is an active-site residue.

This sequence belongs to the CFA/CMAS family. In terms of assembly, homodimer.

It is found in the cytoplasm. The enzyme catalyses (+-)-pavine + S-adenosyl-L-methionine = N-methylpavine + S-adenosyl-L-homocysteine + H(+). It carries out the reaction (S)-reticuline + S-adenosyl-L-methionine = (S)-tembetarine + S-adenosyl-L-homocysteine + H(+). It catalyses the reaction (S)-stylopine + S-adenosyl-L-methionine = (S)-cis-N-methylstylopine + S-adenosyl-L-homocysteine. The catalysed reaction is (S)-scoulerine + S-adenosyl-L-methionine = (S)-cis-N-methylscoulerine + S-adenosyl-L-homocysteine. The enzyme catalyses (S)-tetrahydropapaverine + S-adenosyl-L-methionine = (S)-N-methyltetrahydropapaverine + S-adenosyl-L-homocysteine + H(+). It carries out the reaction (S)-tetrahydropalmatine + S-adenosyl-L-methionine = (S)-cis-N-methyltetrahydropalmatine + S-adenosyl-L-homocysteine. It functions in the pathway alkaloid biosynthesis. In the presence of a racemic mixture of tetrahydropapaverine (THP), one molecule of (S)-THP binds in a productive mode, while one molecule of (R)-THP is bound next to it in a non-productive mode. The (R)-THP seems to inhibit the release of products from the enzyme when higher concentrations of the racemic substrate are added to the reaction. In terms of biological role, N-methyltransferase with a substrate preference for (+-)-pavine and (S)-reticuline, but also active with the protoberberines scoulerine and stylopine and, to a lesser extent, tetrahydropapaverine (THP) and tetrahydropalmatine. Is not active on (R)-reticuline, cryptopine, glaucine, codeine, canadaline, noscapine and berbamine. The polypeptide is Pavine N-methyltransferase (Thalictrum flavum subsp. glaucum (Yellow meadow rue)).